The following is a 376-amino-acid chain: ATP phosphoribosyltransferase regulatory subunit (376 aa).

Belongs to the class-II aminoacyl-tRNA synthetase family. HisZ subfamily. Heteromultimer composed of HisG and HisZ subunits.

It localises to the cytoplasm. It participates in amino-acid biosynthesis; L-histidine biosynthesis; L-histidine from 5-phospho-alpha-D-ribose 1-diphosphate: step 1/9. Required for the first step of histidine biosynthesis. May allow the feedback regulation of ATP phosphoribosyltransferase activity by histidine. The protein is ATP phosphoribosyltransferase regulatory subunit of Brucella ovis (strain ATCC 25840 / 63/290 / NCTC 10512).